The sequence spans 854 residues: Protein mono-ADP-ribosyltransferase PARP8 (854 aa).

Disordered stretches follow at residues 113-138 (NGEE…EFYY) and 291-310 (SYPP…EQDG). A compositionally biased stretch (acidic residues) spans 123–135 (VEEDSEGDNDSEE). 4 positions are modified to ADP-ribosylcysteine: C332, C367, C376, and C395. In terms of domain architecture, PARP catalytic spans 617–844 (EMTQAPYLEI…QEGGIHKEIL (228 aa)). Residues 750-777 (QKVSAKDEPASSSKSSNTSQSQKKGQQS) are disordered. Residues 760–777 (SSSKSSNTSQSQKKGQQS) are compositionally biased toward low complexity.

This sequence belongs to the ARTD/PARP family. In terms of processing, auto-mono-ADP-ribosylated.

The enzyme catalyses L-cysteinyl-[protein] + NAD(+) = S-(ADP-D-ribosyl)-L-cysteinyl-[protein] + nicotinamide + H(+). In terms of biological role, mono-ADP-ribosyltransferase that mediates mono-ADP-ribosylation of target proteins. In Homo sapiens (Human), this protein is Protein mono-ADP-ribosyltransferase PARP8.